The chain runs to 147 residues: MKEKSVLEICFSSKYRCLEQAKKSRPVCATFLFSIKISRTDPLTVLIYQVSVLKSPNCDNCKNDSQKDIFFFLSLYLSSIKIPMLILNIFICSYAIFQIPHFTQEFLTGGWIFFKTRRLPVLDVRECAYCVISDSAPRKEILACSDL.

The helical transmembrane segment at Ile69 to Ile89 threads the bilayer.

Its subcellular location is the membrane. This is an uncharacterized protein from Saccharomyces cerevisiae (strain ATCC 204508 / S288c) (Baker's yeast).